The following is a 115-amino-acid chain: Large ribosomal subunit protein bL19 (115 aa).

It belongs to the bacterial ribosomal protein bL19 family.

Its function is as follows. This protein is located at the 30S-50S ribosomal subunit interface and may play a role in the structure and function of the aminoacyl-tRNA binding site. The chain is Large ribosomal subunit protein bL19 from Streptococcus gordonii (strain Challis / ATCC 35105 / BCRC 15272 / CH1 / DL1 / V288).